The primary structure comprises 442 residues: Probable carboxypeptidase PABG_01461 (442 aa).

The signal sequence occupies residues 1–20; sequence MKLQYLVALLSVQAVPPVTA. Asparagine 102 is a glycosylation site (N-linked (GlcNAc...) asparagine). Aspartate 160 serves as a coordination point for Zn(2+). Glutamate 192 (proton acceptor) is an active-site residue. Residue glutamate 193 participates in Zn(2+) binding. N-linked (GlcNAc...) asparagine glycosylation is present at asparagine 343.

The protein belongs to the peptidase M20A family. The cofactor is Zn(2+).

The protein resides in the secreted. This is Probable carboxypeptidase PABG_01461 from Paracoccidioides brasiliensis (strain Pb03).